A 420-amino-acid polypeptide reads, in one-letter code: Interleukin-5 receptor subunit alpha (420 aa).

An N-terminal signal peptide occupies residues 1–20 (MIIVAHVLLILLGATEILQA). The Extracellular segment spans residues 21–342 (DLLPDEKISL…NDEHKPLREW (322 aa)). The region spanning 32 to 123 (PPVNFTIKVT…ASAELHAPPG (92 aa)) is the Fibronectin type-III 1 domain. Asn35 and Asn131 each carry an N-linked (GlcNAc...) asparagine glycan. 2 disulfide bridges follow: Cys134–Cys155 and Cys182–Cys196. 2 N-linked (GlcNAc...) asparagine glycosylation sites follow: Asn216 and Asn244. The Fibronectin type-III 2 domain occupies 241-334 (PPLNVTAEIE…WSQPIYVGND (94 aa)). An intrachain disulfide couples Cys269 to Cys316. The WSXWS motif signature appears at 322–326 (WSEWS). A helical transmembrane segment spans residues 343 to 362 (FVIVIMATICFILLILSLIC). The Cytoplasmic portion of the chain corresponds to 363 to 420 (KICHLWIKLFPPIPAPKSNIKDLFVTTNYEKAGSSETEIEVICYIEKPGVETLEDSVF). A Box 1 motif motif is present at residues 371-379 (LFPPIPAPK).

The protein belongs to the type I cytokine receptor family. Type 5 subfamily. In terms of assembly, interacts with IL5. Interacts with CSF2RB. Interacts with JAK2. Interacts with SDCBP. Expressed on eosinophils and basophils.

Its subcellular location is the membrane. Cell surface receptor that plays an important role in the survival, differentiation, and chemotaxis of eosinophils. Acts by forming a heterodimeric receptor with CSF2RB subunit and subsequently binding to interleukin-5. In unstimulated conditions, interacts constitutively with JAK2. Heterodimeric receptor activation leads to JAK2 stimulation and subsequent activation of the JAK-STAT pathway. The sequence is that of Interleukin-5 receptor subunit alpha (IL5RA) from Homo sapiens (Human).